Reading from the N-terminus, the 252-residue chain is Putative phosphonates utilization ATP-binding protein PhnK (252 aa).

In terms of domain architecture, ABC transporter spans 6 to 246 (LSVNNLTHLY…PHHPYTQLLV (241 aa)). An ATP-binding site is contributed by 38-45 (GESGSGKT).

The protein belongs to the ABC transporter superfamily. In terms of assembly, forms a complex with PhnG, PhnH, PhnI and PhnJ with the suggested composition PhnG(4)H(2)I(2)J(2)K.

In terms of biological role, belongs to an operon involved in alkylphosphonate uptake and C-P lyase. Exact function not known. PhnK is not required for the ribophosphonate triphosphate (RPnTP) synthase reaction. In Escherichia coli (strain K12), this protein is Putative phosphonates utilization ATP-binding protein PhnK (phnK).